The primary structure comprises 471 residues: A-type ATP synthase subunit B (471 aa).

The protein belongs to the ATPase alpha/beta chains family. As to quaternary structure, has multiple subunits with at least A(3), B(3), C, D, E, F, H, I and proteolipid K(x).

It is found in the cell membrane. In terms of biological role, component of the A-type ATP synthase that produces ATP from ADP in the presence of a proton gradient across the membrane. The B chain is a regulatory subunit. In Ignicoccus hospitalis (strain KIN4/I / DSM 18386 / JCM 14125), this protein is A-type ATP synthase subunit B.